The following is a 690-amino-acid chain: Xylosyl- and glucuronyltransferase LARGE2 (690 aa).

The Cytoplasmic portion of the chain corresponds to 1-8 (MLPRGRPR). The helical; Signal-anchor for type II membrane protein transmembrane segment at 9-29 (AMGAAVLLLLLLLVVGFFLFG) threads the bilayer. The Lumenal segment spans residues 30-690 (RDPDYGLGTT…TALQQARSRA (661 aa)). N-linked (GlcNAc...) asparagine glycosylation is found at asparagine 51 and asparagine 78. Positions 68 to 343 (LHVAIVCAGY…FLGYDGKLLR (276 aa)) are xylosyltransferase activity. Mn(2+) contacts are provided by aspartate 172 and aspartate 174. Asparagine 202 carries N-linked (GlcNAc...) asparagine glycosylation. Residues 344 to 686 (RELFGCPNQF…LKYLTALQQA (343 aa)) form a glucuronyltransferase activity region. The Mn(2+) site is built by aspartate 492 and aspartate 494.

It in the C-terminal section; belongs to the glycosyltransferase 49 family. The protein in the N-terminal section; belongs to the glycosyltransferase 8 family. Belongs to the glycosyltransferase 8 family. Interacts with B4GAT1. The cofactor is Mn(2+). As to expression, highly expressed in the testis and kidney, but weakly expressed in the heart and brain. Expressed during embryogenesis from 7 dpc.

The protein localises to the golgi apparatus membrane. It carries out the reaction 3-O-[beta-D-GlcA-(1-&gt;3)-beta-D-Xyl-(1-&gt;4)-Rib-ol-P-Rib-ol-P-3-beta-D-GalNAc-(1-&gt;3)-beta-D-GlcNAc-(1-&gt;4)-(O-6-P-alpha-D-Man)]-Thr-[protein] + UDP-alpha-D-xylose = 3-O-[alpha-D-Xyl-(1-&gt;3)-beta-D-GlcA-(1-&gt;4)-beta-D-Xyl-(1-&gt;4)-Rib-ol-P-Rib-ol-P-3-beta-D-GalNAc-(1-&gt;3)-beta-D-GlcNAc-(1-&gt;4)-(O-6-P-alpha-D-Man)]-Thr-[protein] + UDP + H(+). It catalyses the reaction 3-O-{(1-&gt;[3)-alpha-D-Xyl-(1-&gt;3)-beta-D-GlcA-(1-&gt;](n)-4)-beta-D-Xyl-(1-&gt;4)-Rib-ol-P-Rib-ol-P-3-beta-D-GalNAc-(1-&gt;3)-beta-D-GlcNAc-(1-&gt;4)-O-6-P-alpha-D-Man}-L-Thr-[protein] + UDP-alpha-D-glucuronate = 3-O-{beta-D-GlcA-(1-&gt;[3)-alpha-D-Xyl-(1-&gt;3)-beta-D-GlcA-(1-&gt;](n)-4)-beta-D-Xyl-(1-&gt;4)-Rib-ol-P-Rib-ol-P-3-beta-D-GalNAc-(1-&gt;3)-beta-D-GlcNAc-(1-&gt;4)-O-6-P-alpha-D-Man}-L-Thr-[protein] + UDP + H(+). The catalysed reaction is 3-O-{beta-D-GlcA-(1-&gt;[3)-alpha-D-Xyl-(1-&gt;3)-beta-D-GlcA-(1-&gt;](n)-4)-beta-D-Xyl-(1-&gt;4)-Rib-ol-P-Rib-ol-P-3-beta-D-GalNAc-(1-&gt;3)-beta-D-GlcNAc-(1-&gt;4)-O-6-P-alpha-D-Man}-L-Thr-[protein] + UDP-alpha-D-xylose = 3-O-{(1-&gt;[3)-alpha-D-Xyl-(1-&gt;3)-beta-D-GlcA-(1-&gt;](n+1)-4)-beta-D-Xyl-(1-&gt;4)-Rib-ol-P-Rib-ol-P-3-beta-D-GalNAc-(1-&gt;3)-beta-D-GlcNAc-(1-&gt;4)-O-6-P-alpha-D-Man}-L-Thr-[protein] + UDP + H(+). Its pathway is protein modification; protein glycosylation. Bifunctional glycosyltransferase with both alpha-1,3-xylosyltransferase and beta-1,3-glucuronyltransferase activities involved in the maturation of alpha-dystroglycan (DAG1) by glycosylation leading to DAG1 binding to laminin G-like domain-containing extracellular proteins with high affinity and in a phosphorylated-O-mannosyl trisaccharide dependent manner. Elongates the glucuronyl-beta-1,4-xylose-beta disaccharide primer structure by adding repeating units [-3-Xylose-alpha-1,3-GlcA-beta-1-] to produce a heteropolysaccharide. Supports the maturation of DAG1 more effectively than LARGE1. In addition, can modify both heparan sulfate (HS)- and chondroitin/dermatan sulfate (CS/DS)-proteoglycans (PGs), namely GPC4, with a glycosaminoglycan (GAG)-like polysaccharide composed of xylose and glucuronic acid to confer laminin binding. The polypeptide is Xylosyl- and glucuronyltransferase LARGE2 (Mus musculus (Mouse)).